A 53-amino-acid chain; its full sequence is MGFLPECNLTCAFLLHSFTFPIAHCPSFSWASFFFTIRPPFFPKLALVCTIFS.

A helical transmembrane segment spans residues 13–35; sequence FLLHSFTFPIAHCPSFSWASFFF.

The protein localises to the membrane. This is an uncharacterized protein from Saccharomyces cerevisiae (strain ATCC 204508 / S288c) (Baker's yeast).